The primary structure comprises 517 residues: Ribosome assembly protein 4 (517 aa).

The segment at 1–25 (MATLAPPPSKRQRREEIQRTQTQQD) is disordered. The interval 34–128 (LGSFKANFID…TITLSAEPQA (95 aa)) is ubiquitin-like (UBL) domain. WD repeat units follow at residues 144–184 (GHGQ…PKFT), 187–226 (GHTGWVLGVSWSPDGKYLATCSMDTTVRVWDPESGKQVNQ), 230–277 (GHAK…HVLS), 278–316 (GHKGSVSCVKWGGTDLIYTGSHDRSVRVWDAVKGTLVHN), 351–397 (EERR…SKPV), 402–441 (GHQNKVNHVQFSPDGTLIASAGWDNSTKLWNARDGKFIKN), 444–483 (GHVAPVYQCAWSADSRLVVTGSKDCTLKVWNVRTGKLAMD), and 486–517 (GHEDEVYAVDWAADGELVASGGKDKAVRTWRN).

It belongs to the NLE1/RSA4 family. As to quaternary structure, associates with the pre-60S ribosomal particle. Interacts (via WD repeats) with uL18. Interacts (via UBL domain) with MDN1 (via VWFA/MIDAS domain). Interacts (via WD repeats) with NSA2.

Its subcellular location is the nucleus. The protein resides in the nucleolus. In terms of biological role, involved in ribosome biogenesis. Required for processing and efficient intra-nuclear transport of pre-60S ribosomal subunits. Interacts with the AAA-ATPase Midasin, which is essential for the ATP-dependent dissociation of a group of nonribosomal factors from the pre-60S particle. The protein is Ribosome assembly protein 4 of Chaetomium thermophilum (strain DSM 1495 / CBS 144.50 / IMI 039719) (Thermochaetoides thermophila).